A 349-amino-acid chain; its full sequence is UDP-N-acetylenolpyruvoylglucosamine reductase (349 aa).

The FAD-binding PCMH-type domain occupies 24-197 (FGIDATARFA…VAVTFRLPKR (174 aa)). Arginine 173 is a catalytic residue. Serine 249 serves as the catalytic Proton donor. Residue glutamate 345 is part of the active site.

The protein belongs to the MurB family. The cofactor is FAD.

It localises to the cytoplasm. The enzyme catalyses UDP-N-acetyl-alpha-D-muramate + NADP(+) = UDP-N-acetyl-3-O-(1-carboxyvinyl)-alpha-D-glucosamine + NADPH + H(+). Its pathway is cell wall biogenesis; peptidoglycan biosynthesis. Functionally, cell wall formation. This is UDP-N-acetylenolpyruvoylglucosamine reductase from Burkholderia ambifaria (strain MC40-6).